Consider the following 260-residue polypeptide: Ditrans,polycis-undecaprenyl-diphosphate synthase ((2E,6E)-farnesyl-diphosphate specific) (260 aa).

The active site involves D20. D20 is a Mg(2+) binding site. Substrate is bound by residues 21-24, W25, R33, H37, and 65-67; these read GNGR and SSE. N68 serves as the catalytic Proton acceptor. Residues W69, R71, and R188 each contribute to the substrate site. Position 193 (H193) interacts with Mg(2+). Substrate is bound at residue 194–196; that stretch reads RIS. Mg(2+) is bound at residue E207.

This sequence belongs to the UPP synthase family. Homodimer. Requires Mg(2+) as cofactor.

The catalysed reaction is 8 isopentenyl diphosphate + (2E,6E)-farnesyl diphosphate = di-trans,octa-cis-undecaprenyl diphosphate + 8 diphosphate. Functionally, catalyzes the sequential condensation of isopentenyl diphosphate (IPP) with (2E,6E)-farnesyl diphosphate (E,E-FPP) to yield (2Z,6Z,10Z,14Z,18Z,22Z,26Z,30Z,34E,38E)-undecaprenyl diphosphate (di-trans,octa-cis-UPP). UPP is the precursor of glycosyl carrier lipid in the biosynthesis of bacterial cell wall polysaccharide components such as peptidoglycan and lipopolysaccharide. This chain is Ditrans,polycis-undecaprenyl-diphosphate synthase ((2E,6E)-farnesyl-diphosphate specific), found in Wigglesworthia glossinidia brevipalpis.